The primary structure comprises 890 residues: Serine/threonine-protein kinase D3 (890 aa).

Phosphoserine occurs at positions 6, 27, 37, 41, and 44. A Phorbol-ester/DAG-type 1 zinc finger spans residues P154–C204. S213 and S216 each carry phosphoserine. The Phorbol-ester/DAG-type 2 zinc-finger motif lies at P271–C321. Positions S332–F371 are disordered. Phosphoserine is present on residues S364, S391, and S395. A PH domain is found at T416 to M532. A Phosphotyrosine modification is found at Y426. S442 bears the Phosphoserine mark. Phosphotyrosine is present on Y457. Phosphothreonine is present on T535. S539 is modified (phosphoserine). A Protein kinase domain is found at I576 to L832. Residues L582–V590 and K605 contribute to the ATP site. Catalysis depends on D699, which acts as the Proton acceptor. S731 carries the phosphoserine; by PKC modification. The residue at position 735 (S735) is a Phosphoserine; by autocatalysis. Y742 carries the post-translational modification Phosphotyrosine.

Belongs to the protein kinase superfamily. CAMK Ser/Thr protein kinase family. PKD subfamily. It depends on Mg(2+) as a cofactor. Ubiquitous.

Its subcellular location is the cytoplasm. It is found in the membrane. It carries out the reaction L-seryl-[protein] + ATP = O-phospho-L-seryl-[protein] + ADP + H(+). It catalyses the reaction L-threonyl-[protein] + ATP = O-phospho-L-threonyl-[protein] + ADP + H(+). With respect to regulation, activated by DAG and phorbol esters. Phorbol-ester/DAG-type domains 1 and 2 bind both DAG and phorbol ester with high affinity and mediate translocation to the cell membrane. Autophosphorylation of Ser-735 and phosphorylation of Ser-731 by PKC relieves auto-inhibition by the PH domain. In terms of biological role, converts transient diacylglycerol (DAG) signals into prolonged physiological effects, downstream of PKC. Involved in resistance to oxidative stress. The chain is Serine/threonine-protein kinase D3 (PRKD3) from Homo sapiens (Human).